Here is a 357-residue protein sequence, read N- to C-terminus: Alkanal monooxygenase alpha chain (357 aa).

This sequence belongs to the bacterial luciferase oxidoreductase family. Heterodimer of an alpha and a beta chain.

It carries out the reaction a long-chain fatty aldehyde + FMNH2 + O2 = a long-chain fatty acid + hnu + FMN + H2O + 2 H(+). Light-emitting reaction in luminous bacteria. This Kryptophanaron alfredi symbiont protein is Alkanal monooxygenase alpha chain (luxA).